We begin with the raw amino-acid sequence, 321 residues long: Mas-related G-protein coupled receptor member H (321 aa).

Residues 1-35 (MEPLAMTLYPLESTQPTRNKTPNETTWSSEHTDDH) lie on the Extracellular side of the membrane. N23 is a glycosylation site (N-linked (GlcNAc...) asparagine). The helical transmembrane segment at 36 to 56 (TYFLVSLVICSLGLAGNGLLI) threads the bilayer. Topologically, residues 57 to 71 (WFLIFCIKRKPFTIY) are cytoplasmic. The helical transmembrane segment at 72–92 (ILHLAIADFMVLLCSSIMKLV) threads the bilayer. Residues 93–102 (NTFHIYNMTL) are Extracellular-facing. A glycan (N-linked (GlcNAc...) asparagine) is linked at N99. A helical membrane pass occupies residues 103 to 126 (ESYAILFMIFGYNTGLHLLTAISV). Topologically, residues 127-147 (ERCLSVLYPIWYQCQRPKHQS) are cytoplasmic. The helical transmembrane segment at 148–168 (AVACMLLWALSVLVSGLENFF) threads the bilayer. At 169–188 (CILEVKPQFPECRYVYIFSC) the chain is on the extracellular side. A helical transmembrane segment spans residues 189–209 (ILTFLVFVPLMIFSNLILFIQ). Over 210–225 (VCCNLKPRQPTKLYVI) the chain is Cytoplasmic. A helical membrane pass occupies residues 226-246 (IMTTVILFLVFAMPMKVLLII). A topological domain (extracellular) is located at residue G247. Residues 248–271 (YYSSSLDDSVWDSLPYLNMLSTIN) form a helical membrane-spanning segment. At 272 to 320 (CSINPIVYFVVGSLRRKRSRKSLKEALQKVFEEKPVVASRENVTQFSLP) the chain is on the cytoplasmic side.

The protein belongs to the G-protein coupled receptor 1 family. Mas subfamily.

It localises to the cell membrane. Orphan receptor. May regulate nociceptor function and/or development, including the sensation or modulation of pain. The chain is Mas-related G-protein coupled receptor member H (Mrgprh) from Mus musculus (Mouse).